Reading from the N-terminus, the 299-residue chain is Ribosomal RNA small subunit methyltransferase H (299 aa).

S-adenosyl-L-methionine-binding positions include 36 to 38 (GGH), D55, D103, and Q110. 2 stretches are compositionally biased toward basic and acidic residues: residues 268–282 (KPVRPSEEEIRENPR) and 289–299 (RAAERIEKGGD). Residues 268 to 299 (KPVRPSEEEIRENPRARSGRLRAAERIEKGGD) form a disordered region.

It belongs to the methyltransferase superfamily. RsmH family.

It localises to the cytoplasm. It carries out the reaction cytidine(1402) in 16S rRNA + S-adenosyl-L-methionine = N(4)-methylcytidine(1402) in 16S rRNA + S-adenosyl-L-homocysteine + H(+). Functionally, specifically methylates the N4 position of cytidine in position 1402 (C1402) of 16S rRNA. This chain is Ribosomal RNA small subunit methyltransferase H, found in Thermotoga petrophila (strain ATCC BAA-488 / DSM 13995 / JCM 10881 / RKU-1).